Consider the following 648-residue polypeptide: Mitotic interactor and substrate of PLK1 (648 aa).

At S77 the chain carries Phosphoserine; by CDK1. T149 and T190 each carry phosphothreonine. S220 bears the Phosphoserine mark. Disordered regions lie at residues 242–383 and 430–460; these read VNDP…PEAR and KATE…GKAT. S253 carries the post-translational modification Phosphoserine; by CDK1. Residues 255–281 are compositionally biased toward basic and acidic residues; the sequence is ETPKETPIEREIRLAQEREAELREQRG. T256 carries the phosphothreonine; by CDK1 modification. S318 carries the post-translational modification Phosphoserine. Residues 325 to 339 show a composition bias toward basic and acidic residues; the sequence is MVQETQREEDHRREG. Position 347 is a phosphothreonine; by CDK1 (T347). Positions 349-367 are enriched in polar residues; the sequence is DWPSQDPQPGLQRSLSSDC. 2 positions are modified to phosphoserine: S352 and S364. Phosphoserine; by PLK1 occurs at positions 365 and 439. Residues 440 to 450 show a composition bias toward polar residues; sequence ESSGRSLSSKQ. Phosphoserine occurs at positions 507 and 509. A coiled-coil region spans residues 511-534; it reads DLLEREMESVLRREREVAEERRNA. Positions 539 to 568 are disordered; the sequence is VFSPVPAEDESHEQDSRSSSRASGITGSYS. S541 carries the phosphoserine; by CDK1 modification. A Phosphoserine; by PLK1 modification is found at S554. The span at 557 to 568 shows a compositional bias: polar residues; it reads SSRASGITGSYS. At S644 the chain carries Phosphoserine.

The protein belongs to the MISP family. Associates with F-actin. Interacts with DCTN1; this interaction regulates DCTN1 distribution at the cell cortex. Interacts with PTK2/FAK and MAPRE1. Phosphorylated by CDK1 and PLK1. CDK1 is the priming kinase for PLK1 phosphorylation. Phosphorylation by PLK1 is required for proper spindle orientation at metaphase.

The protein localises to the cell junction. Its subcellular location is the focal adhesion. The protein resides in the cytoplasm. It localises to the cytoskeleton. It is found in the cell cortex. In terms of biological role, plays a role in mitotic spindle orientation and mitotic progression. Regulates the distribution of dynactin at the cell cortex in a PLK1-dependent manner, thus stabilizing cortical and astral microtubule attachments required for proper mitotic spindle positioning. May link microtubules to the actin cytoskeleton and focal adhesions. May be required for directed cell migration and centrosome orientation. May also be necessary for proper stacking of the Golgi apparatus. The sequence is that of Mitotic interactor and substrate of PLK1 from Mus musculus (Mouse).